We begin with the raw amino-acid sequence, 183 residues long: Translocon-associated protein subunit beta (183 aa).

A signal peptide spans 1–17 (MRLLAFAVLALFAVTQA). At 18–146 (EEGARLLASK…REFDRRFSPH (129 aa)) the chain is on the lumenal side. Asn88 is a glycosylation site (N-linked (GlcNAc...) asparagine). Residues 147–167 (FLDWAAFGVMTLPSIGVPLLL) traverse the membrane as a helical segment. Over 168-183 (WYSSKRKYDTPKTKKN) the chain is Cytoplasmic.

This sequence belongs to the TRAP-beta family. In terms of assembly, heterotetramer of TRAP-alpha, TRAP-beta, TRAP-delta and TRAP-gamma. Interacts with STING1.

The protein resides in the endoplasmic reticulum membrane. In terms of biological role, TRAP proteins are part of a complex whose function is to bind calcium to the ER membrane and thereby regulate the retention of ER resident proteins. The polypeptide is Translocon-associated protein subunit beta (SSR2) (Bos taurus (Bovine)).